The primary structure comprises 200 residues: NADH-quinone oxidoreductase subunit C (200 aa).

It belongs to the complex I 30 kDa subunit family. In terms of assembly, NDH-1 is composed of 14 different subunits. Subunits NuoB, C, D, E, F, and G constitute the peripheral sector of the complex.

Its subcellular location is the cell inner membrane. The enzyme catalyses a quinone + NADH + 5 H(+)(in) = a quinol + NAD(+) + 4 H(+)(out). Its function is as follows. NDH-1 shuttles electrons from NADH, via FMN and iron-sulfur (Fe-S) centers, to quinones in the respiratory chain. The immediate electron acceptor for the enzyme in this species is believed to be ubiquinone. Couples the redox reaction to proton translocation (for every two electrons transferred, four hydrogen ions are translocated across the cytoplasmic membrane), and thus conserves the redox energy in a proton gradient. The polypeptide is NADH-quinone oxidoreductase subunit C (Cereibacter sphaeroides (strain ATCC 17029 / ATH 2.4.9) (Rhodobacter sphaeroides)).